Consider the following 562-residue polypeptide: Protein wntless (562 aa).

The Cytoplasmic portion of the chain corresponds to 1 to 13 (MSGTILENLSGRK). The helical transmembrane segment at 14-34 (LSILVGSLLLCQVLCFLLGGL) threads the bilayer. Residues 35–239 (YAPVPAGHTN…AIHQNGGFTH (205 aa)) lie on the Lumenal side of the membrane. An N-linked (GlcNAc...) asparagine glycan is attached at N58. Residues 240-260 (VWLMLKTLLFPFVVGIMVWFW) traverse the membrane as a helical segment. Over 261–270 (RRVHLLQRSP) the chain is Cytoplasmic. The helical transmembrane segment at 271 to 291 (ALLEYMLLYLGGALTFLNLPL) threads the bilayer. Residues 292 to 311 (EYLSLTIEMPYMLLLSDIRQ) are Lumenal-facing. The chain crosses the membrane as a helical span at residues 312 to 332 (GIFYAMLLSFWLVFAGEHMLI). Residues 333-344 (QDSHNKSTIRSR) are Cytoplasmic-facing. The helical transmembrane segment at 345–365 (YWKHLSAVVVGCISLFVFDIS) threads the bilayer. Topologically, residues 366–386 (ERGVQLRNPFYSIWTTPLGAK) are lumenal. The helical transmembrane segment at 387–407 (VAMSFILLAGVSAAVYFLFLC) threads the bilayer. Residues 408-441 (YMISKVFKNIGDKRTSLPSMSQARRLHYEGLIYR) lie on the Cytoplasmic side of the membrane. The chain crosses the membrane as a helical span at residues 442–462 (FKFLMLATLLCAALTVTGFIM). At 463 to 482 (GQMAEGQWKWNDDVEIQLTS) the chain is on the lumenal side. A helical transmembrane segment spans residues 483–503 (AFLTGVYGMWNIYIFALLILY). At 504–562 (APSHKQWPTMHHSDETTQSNENIVASAASEEIEFSNLPSDSNPSEISSLTSFTRKVAFE) the chain is on the cytoplasmic side. The disordered stretch occupies residues 538-562 (SNLPSDSNPSEISSLTSFTRKVAFE). The segment covering 539-556 (NLPSDSNPSEISSLTSFT) has biased composition (polar residues).

The protein belongs to the wntless family. In terms of assembly, interacts with wg; in the Golgi. Interacts with Vps35, a component of the retromer complex; wls stability is regulated by Vps35.

The protein resides in the presynaptic cell membrane. The protein localises to the postsynaptic cell membrane. It is found in the cell membrane. It localises to the endoplasmic reticulum membrane. Its subcellular location is the endosome membrane. The protein resides in the golgi apparatus membrane. In terms of biological role, a segment polarity gene required for wingless (wg)-dependent patterning processes, acting in both wg-sending cells and wg-target cells. In non-neuronal cells wls directs wg secretion. The wls traffic loop encompasses the Golgi, the cell surface, an endocytic compartment and a retrograde route leading back to the Golgi, and involves clathrin-mediated endocytosis and the retromer complex (a conserved protein complex consisting of Vps35 and Vps26). In neuronal cells (the larval motorneuron NMJ), the wg signal moves across the synapse via the release of wls-containing exosome-like vesicles. Postsynaptic wls is required for the trafficking of fz2 through the fz2-interacting protein Grip. This chain is Protein wntless, found in Drosophila persimilis (Fruit fly).